The primary structure comprises 118 residues: Small ribosomal subunit protein uS13 (118 aa).

The disordered stretch occupies residues 94-118 (GLPVRGQRTKTNARTRKGPRKPIKK).

This sequence belongs to the universal ribosomal protein uS13 family. In terms of assembly, part of the 30S ribosomal subunit. Forms a loose heterodimer with protein S19. Forms two bridges to the 50S subunit in the 70S ribosome.

Functionally, located at the top of the head of the 30S subunit, it contacts several helices of the 16S rRNA. In the 70S ribosome it contacts the 23S rRNA (bridge B1a) and protein L5 of the 50S subunit (bridge B1b), connecting the 2 subunits; these bridges are implicated in subunit movement. Contacts the tRNAs in the A and P-sites. This chain is Small ribosomal subunit protein uS13, found in Salmonella paratyphi A (strain ATCC 9150 / SARB42).